The sequence spans 500 residues: Matrilin-1 (500 aa).

A signal peptide spans 1–29 (MKVTSGPAFALCSLLLLLLLLLQVPDSLS). Residues 30–226 (LVPQPRGHLC…AKKFQEAFCV (197 aa)) form the VWFA 1 domain. N-linked (GlcNAc...) asparagine glycosylation occurs at asparagine 80. Residues 227–267 (VSDLCATGDHDCEQLCVSSPGSYTCACHEGFTLNSDGKTCN) enclose the EGF-like domain. 3 disulfides stabilise this stretch: cysteine 231/cysteine 242, cysteine 238/cysteine 251, and cysteine 253/cysteine 266. The region spanning 268-457 (VCRGGGSGSA…GKKLQKQICV (190 aa)) is the VWFA 2 domain. Asparagine 348 is a glycosylation site (N-linked (GlcNAc...) asparagine). Positions 471-499 (EAKVEGLLQALTRKLEAVSGRLAVLENRI) form a coiled coil.

In terms of assembly, homotrimer. Part of a complex composed of MATN1 (via VWFA1 domain), type 2 collagens and type 6 collagens. Forms a complex (via covalent bonds) with ACAN; the interaction increases in abundance with increasing age of the organism via an increase in occupancy of MATN1 binding sites. Interacts with COMP. Post-translationally, N-glycosylated; reduces binding affinity for type 2 collagens. In terms of tissue distribution, expressed in femoral head articular cartilage. Expressed in the trachea and extraskeletal tissue around the eye.

The protein resides in the secreted. It is found in the extracellular space. It localises to the extracellular matrix. Its function is as follows. A major component of the extracellular matrix of non-articular cartilage. Binds to type 2 collagens and forms long concatenated protein networks as part of the extracellular matrix. Required for the network-like organization and bundling of collagen fibrils surrounding chondrocytes in the zones of maturation and hypertrophy. Required for mechanotransduction and adaption to mechanical loading in cartilage chondrocytes, resulting in an increase in expression of the extracellular matrix components ACAN and COL2A1. Acts as a moderator of angiogenesis in response to injury. The polypeptide is Matrilin-1 (Mus musculus (Mouse)).